Consider the following 423-residue polypeptide: Hydroxymethylglutaryl-CoA synthase-like protein AKT4-1 (423 aa).

This sequence belongs to the thiolase-like superfamily. HMG-CoA synthase family.

It participates in mycotoxin biosynthesis. In terms of biological role, hydroxymethylglutaryl-CoA synthase-like protein; part of the gene clusters that mediate the biosynthesis of the host-selective toxins (HSTs) AK-toxins responsible for Japanese pear black spot disease by the Japanese pear pathotype. AK-toxins are esters of 9,10-epoxy 8-hydroxy 9-methyldecatrienoic acid (EDA). On cellular level, AK-toxins affect plasma membrane of susceptible cells and cause a sudden increase in loss of K(+) after a few minutes of toxin treatment. The acyl-CoA ligase AKT1, the hydrolase AKT2 and enoyl-CoA hydratase AKT3 are all involved in the biosynthesis of the AK-, AF- and ACT-toxin common 9,10-epoxy-8-hydroxy-9-methyl-decatrienoic acid (EDA) structural moiety. Part of the EDA biosynthesis occurs in the peroxisome since these 3 enzymes are localized in peroxisomes. The exact roles of the 3 enzymes, as well as of additional AK-toxin clusters enzymes, including AKT4, AKT6 and AKTS1, have still to be elucidated. The Cytochrome P450 monooxygenase AKT7 on the other side functions to limit production of EDA and AK-toxin, probably via the catalysis of a side reaction of EDA or its precursor. The chain is Hydroxymethylglutaryl-CoA synthase-like protein AKT4-1 from Alternaria alternata (Alternaria rot fungus).